Here is a 569-residue protein sequence, read N- to C-terminus: MGSAVMDTKKKKDVSSPGGSGGKKNASQKRRSLRVHIPDLSSFAMPLLDGDLEGSGKHSSRKVDSPFGPGSPSKGFFSRGPQPRPSSPMSAPVRPKTSPGSPKTVFPFSYQESPPRSPRRMSFSGIFRSSSKESSPNSNPATSPGGIRFFSRSRKTSGLSSSPSTPTQVTKQHTFPLESYKHEPERLENRIYASSSPPDTGQRFCPSSFQSPTRPPLASPTHYAPSKAAALAAALGPAEAGMLEKLEFEDEAVEDSESGVYMRFMRSHKCYDIVPTSSKLVVFDTTLQVKKAFFALVANGVRAAPLWESKKQSFVGMLTITDFINILHRYYKSPMVQIYELEEHKIETWRELYLQETFKPLVNISPDASLFDAVYSLIKNKIHRLPVIDPISGNALYILTHKRILKFLQLFMSDMPKPAFMKQNLDELGIGTYHNIAFIHPDTPIIKALNIFVERRISALPVVDESGKVVDIYSKFDVINLAAEKTYNNLDITVTQALQHRSQYFEGVVKCNKLEILETIVDRIVRAEVHRLVVVNEADSIVGIISLSDILQALILTPAGAKQKETETE.

Residues 1–222 (MGSAVMDTKK…TRPPLASPTH (222 aa)) form a disordered region. A phosphoserine mark is found at S65, S71, S73, S90, S138, S143, S161, and S162. Residues 156 to 167 (TSGLSSSPSTPT) show a composition bias toward low complexity. A Phosphothreonine modification is found at T165. Over residues 179–189 (SYKHEPERLEN) the composition is skewed to basic and acidic residues. Over residues 192–212 (YASSSPPDTGQRFCPSSFQSP) the composition is skewed to polar residues. S196 is modified (phosphoserine). 3 CBS domains span residues 275-335 (PTSS…KSPM), 357-415 (TFKP…MSDM), and 430-492 (IGTY…NLDI). ADP is bound by residues R302, 317-322 (MLTITD), V362, 383-384 (HR), and K402. Residues R302, 317–322 (MLTITD), V362, H383, 383–384 (HR), K402, T432, A437, 458–459 (SA), 474–477 (SKFD), R501, H530, 530–531 (HR), and 546–549 (SLSD) contribute to the AMP site. ATP is bound by residues R302, 317-322 (MLTITD), V362, 383-384 (HR), R384, and K402. The AMPK pseudosubstrate motif lies at 370–391 (LFDAVYSLIKNKIHRLPVIDPI). ADP-binding positions include 474 to 477 (SKFD), R501, and 530 to 531 (HR). Residues 474–477 (SKFD), R501, and 530–531 (HR) each bind ATP. The region spanning 504-562 (YFEGVVKCNKLEILETIVDRIVRAEVHRLVVVNEADSIVGIISLSDILQALILTPAGAK) is the CBS 4 domain.

Belongs to the 5'-AMP-activated protein kinase gamma subunit family. As to quaternary structure, AMPK is a heterotrimer of an alpha catalytic subunit (PRKAA1 or PRKAA2), a beta (PRKAB1 or PRKAB2) and a gamma non-catalytic subunits (PRKAG1, PRKAG2 or PRKAG3). Interacts with FNIP1 and FNIP2. Post-translationally, phosphorylated by ULK1; leading to negatively regulate AMPK activity and suggesting the existence of a regulatory feedback loop between ULK1 and AMPK. Glycosylated; O-GlcNAcylated by OGT, promoting the AMP-activated protein kinase (AMPK) activity. In terms of tissue distribution, isoform B is ubiquitously expressed except in liver and thymus. The highest level is detected in heart with abundant expression in placenta and testis.

Functionally, AMP/ATP-binding subunit of AMP-activated protein kinase (AMPK), an energy sensor protein kinase that plays a key role in regulating cellular energy metabolism. In response to reduction of intracellular ATP levels, AMPK activates energy-producing pathways and inhibits energy-consuming processes: inhibits protein, carbohydrate and lipid biosynthesis, as well as cell growth and proliferation. AMPK acts via direct phosphorylation of metabolic enzymes, and by longer-term effects via phosphorylation of transcription regulators. Also acts as a regulator of cellular polarity by remodeling the actin cytoskeleton; probably by indirectly activating myosin. Gamma non-catalytic subunit mediates binding to AMP, ADP and ATP, leading to activate or inhibit AMPK: AMP-binding results in allosteric activation of alpha catalytic subunit (PRKAA1 or PRKAA2) both by inducing phosphorylation and preventing dephosphorylation of catalytic subunits. ADP also stimulates phosphorylation, without stimulating already phosphorylated catalytic subunit. ATP promotes dephosphorylation of catalytic subunit, rendering the AMPK enzyme inactive. The sequence is that of 5'-AMP-activated protein kinase subunit gamma-2 (PRKAG2) from Homo sapiens (Human).